The following is a 317-amino-acid chain: Glutaminase (317 aa).

Positions 67, 118, 162, 169, 193, 245, and 263 each coordinate substrate.

It belongs to the glutaminase family. Homotetramer.

It catalyses the reaction L-glutamine + H2O = L-glutamate + NH4(+). The chain is Glutaminase from Brucella canis (strain ATCC 23365 / NCTC 10854 / RM-666).